The primary structure comprises 187 residues: Calmodulin-like protein 1 (187 aa).

Ala-2 carries the post-translational modification N-acetylalanine. EF-hand domains follow at residues 8 to 43 (EQIG…LGQN), 44 to 79 (PTEA…KLRD), 81 to 116 (DSEE…IGER), and 117 to 152 (LTDE…KKRR). Positions 21, 23, 25, 27, 32, 57, 59, 61, 63, 68, 94, 96, 98, 105, 130, 132, 134, 136, and 141 each coordinate Ca(2+). Residues 153-187 (KRIEEKRDHDGGSRTKSAGPSAAPASKRGQKCVIL) are disordered. Over residues 154–165 (RIEEKRDHDGGS) the composition is skewed to basic and acidic residues. The span at 169 to 178 (SAGPSAAPAS) shows a compositional bias: low complexity. Cys-184 is modified (cysteine methyl ester). Residue Cys-184 is the site of S-farnesyl cysteine attachment. The propeptide at 185–187 (VIL) is removed in mature form.

This sequence belongs to the calmodulin family.

It is found in the membrane. Functionally, calcium-binding protein that binds and activates CAMK1, a calcium/calmodulin-dependent kinase. The protein is Calmodulin-like protein 1 (CML1) of Oryza sativa subsp. japonica (Rice).